We begin with the raw amino-acid sequence, 687 residues long: DNA ligase (687 aa).

NAD(+) is bound by residues Asp34–Asp38, Ser83–Leu84, and Glu117. Lys119 serves as the catalytic N6-AMP-lysine intermediate. 4 residues coordinate NAD(+): Arg140, Glu182, Lys298, and Lys322. The Zn(2+) site is built by Cys416, Cys419, Cys434, and Cys439. The region spanning Glu609 to Glu687 is the BRCT domain.

The protein belongs to the NAD-dependent DNA ligase family. LigA subfamily. It depends on Mg(2+) as a cofactor. Mn(2+) is required as a cofactor.

It carries out the reaction NAD(+) + (deoxyribonucleotide)n-3'-hydroxyl + 5'-phospho-(deoxyribonucleotide)m = (deoxyribonucleotide)n+m + AMP + beta-nicotinamide D-nucleotide.. Its function is as follows. DNA ligase that catalyzes the formation of phosphodiester linkages between 5'-phosphoryl and 3'-hydroxyl groups in double-stranded DNA using NAD as a coenzyme and as the energy source for the reaction. It is essential for DNA replication and repair of damaged DNA. The chain is DNA ligase from Anaeromyxobacter dehalogenans (strain 2CP-C).